The following is a 191-amino-acid chain: Protein GrpE (191 aa).

The span at 1 to 15 shows a compositional bias: basic and acidic residues; it reads MGKEEKNNIEDKALD. A disordered region spans residues 1 to 35; the sequence is MGKEEKNNIEDKALDNEQEMDQESTSKAVEELSIE.

This sequence belongs to the GrpE family. As to quaternary structure, homodimer.

It localises to the cytoplasm. Its function is as follows. Participates actively in the response to hyperosmotic and heat shock by preventing the aggregation of stress-denatured proteins, in association with DnaK and GrpE. It is the nucleotide exchange factor for DnaK and may function as a thermosensor. Unfolded proteins bind initially to DnaJ; upon interaction with the DnaJ-bound protein, DnaK hydrolyzes its bound ATP, resulting in the formation of a stable complex. GrpE releases ADP from DnaK; ATP binding to DnaK triggers the release of the substrate protein, thus completing the reaction cycle. Several rounds of ATP-dependent interactions between DnaJ, DnaK and GrpE are required for fully efficient folding. This chain is Protein GrpE, found in Francisella philomiragia subsp. philomiragia (strain ATCC 25017 / CCUG 19701 / FSC 153 / O#319-036).